An 88-amino-acid polypeptide reads, in one-letter code: Small ribosomal subunit protein uS15 (88 aa).

Belongs to the universal ribosomal protein uS15 family. In terms of assembly, part of the 30S ribosomal subunit. Forms a bridge to the 50S subunit in the 70S ribosome, contacting the 23S rRNA.

One of the primary rRNA binding proteins, it binds directly to 16S rRNA where it helps nucleate assembly of the platform of the 30S subunit by binding and bridging several RNA helices of the 16S rRNA. In terms of biological role, forms an intersubunit bridge (bridge B4) with the 23S rRNA of the 50S subunit in the ribosome. This is Small ribosomal subunit protein uS15 from Hydrogenovibrio crunogenus (strain DSM 25203 / XCL-2) (Thiomicrospira crunogena).